Consider the following 89-residue polypeptide: MANIKSAIKRAKTSEKRRAHNASMKSAMRTAIKKFEALVELKDVEKAREAFIIASKKLDKAASKGLIHKNAASRQKSRLAKKLNSIQAS.

Disordered stretches follow at residues 1-25 (MANI…ASMK) and 69-89 (KNAA…IQAS). Residues 7-20 (AIKRAKTSEKRRAH) show a composition bias toward basic residues.

The protein belongs to the bacterial ribosomal protein bS20 family.

Functionally, binds directly to 16S ribosomal RNA. In Geobacillus kaustophilus (strain HTA426), this protein is Small ribosomal subunit protein bS20.